The primary structure comprises 308 residues: Protein translocase subunit SecF (308 aa).

6 consecutive transmembrane segments (helical) span residues 14–34 (FFLL…LFGF), 134–154 (VYAV…RFEF), 158–178 (ISGI…FALL), 185–205 (TFVA…IVIF), 238–258 (SIRT…FGGI), and 267–287 (LIIG…PIWV).

Belongs to the SecD/SecF family. SecF subfamily. Forms a complex with SecD. Part of the essential Sec protein translocation apparatus which comprises SecA, SecYEG and auxiliary proteins SecDF. Other proteins may also be involved.

The protein localises to the cell membrane. Its function is as follows. Part of the Sec protein translocase complex. Interacts with the SecYEG preprotein conducting channel. SecDF uses the proton motive force (PMF) to complete protein translocation after the ATP-dependent function of SecA. This chain is Protein translocase subunit SecF, found in Alicyclobacillus acidocaldarius subsp. acidocaldarius (strain ATCC 27009 / DSM 446 / BCRC 14685 / JCM 5260 / KCTC 1825 / NBRC 15652 / NCIMB 11725 / NRRL B-14509 / 104-IA) (Bacillus acidocaldarius).